The following is a 552-amino-acid chain: Urocanate hydratase (552 aa).

Residues 49 to 50 (GG), Gln127, 173 to 175 (GMG), Asp193, 239 to 240 (NA), 260 to 264 (QTSAH), 270 to 271 (YI), and Tyr319 contribute to the NAD(+) site. The active site involves Cys407. Gly489 contributes to the NAD(+) binding site.

The protein belongs to the urocanase family. NAD(+) serves as cofactor.

The protein resides in the cytoplasm. The catalysed reaction is 4-imidazolone-5-propanoate = trans-urocanate + H2O. It participates in amino-acid degradation; L-histidine degradation into L-glutamate; N-formimidoyl-L-glutamate from L-histidine: step 2/3. Catalyzes the conversion of urocanate to 4-imidazolone-5-propionate. The sequence is that of Urocanate hydratase from Bacillus cereus (strain G9842).